A 412-amino-acid chain; its full sequence is Multifunctional CCA protein (412 aa).

2 residues coordinate ATP: glycine 8 and arginine 11. Residues glycine 8 and arginine 11 each coordinate CTP. Mg(2+) is bound by residues aspartate 21 and aspartate 23. ATP is bound by residues arginine 91, arginine 137, and arginine 140. Residues arginine 91, arginine 137, and arginine 140 each contribute to the CTP site. Residues 228-329 enclose the HD domain; it reads TGIHTLMTLS…VKLFDSIDAW (102 aa).

It belongs to the tRNA nucleotidyltransferase/poly(A) polymerase family. Bacterial CCA-adding enzyme type 1 subfamily. Monomer. Can also form homodimers and oligomers. Mg(2+) is required as a cofactor. Requires Ni(2+) as cofactor.

The enzyme catalyses a tRNA precursor + 2 CTP + ATP = a tRNA with a 3' CCA end + 3 diphosphate. It carries out the reaction a tRNA with a 3' CCA end + 2 CTP + ATP = a tRNA with a 3' CCACCA end + 3 diphosphate. In terms of biological role, catalyzes the addition and repair of the essential 3'-terminal CCA sequence in tRNAs without using a nucleic acid template. Adds these three nucleotides in the order of C, C, and A to the tRNA nucleotide-73, using CTP and ATP as substrates and producing inorganic pyrophosphate. tRNA 3'-terminal CCA addition is required both for tRNA processing and repair. Also involved in tRNA surveillance by mediating tandem CCA addition to generate a CCACCA at the 3' terminus of unstable tRNAs. While stable tRNAs receive only 3'-terminal CCA, unstable tRNAs are marked with CCACCA and rapidly degraded. This Escherichia coli (strain SE11) protein is Multifunctional CCA protein.